The sequence spans 792 residues: Receptor-like protein 54 (792 aa).

Residues 1-21 (MKSNLAVFFITCFFCCVFVTS) form the signal peptide. The Extracellular segment spans residues 22 to 758 (DSVYTLPFPF…PKQEHALNWK (737 aa)). N-linked (GlcNAc...) asparagine glycans are attached at residues asparagine 68 and asparagine 107. 12 LRR repeats span residues 114 to 137 (QHLRYLDLSENHFDSSPIPSGFGR), 139 to 162 (TYLESLDLSKNGFIGEVPSSISNL), 163 to 187 (SRLTNLDLSYNKLTGGIPNLHSLTL), 189 to 209 (ENIDLSYNKFSGAIPSYLFTM), 211 to 233 (FLVSLNLRQNHLSDPLENINYSA), 235 to 258 (SKLLILDMAYNLMSHRILEPISKL), 259 to 282 (ANLIQIDLSFQKTPYTFNFDFLLF), 283 to 302 (KSLVRLDLSGNSVSVVGTGS), 303 to 324 (ENLTHLDLSSCNITEFPMFIKD), 325 to 349 (LQRLWWLDISNNRIKGKVPELLWTL), 351 to 374 (SMLHVNLSRNSFDSLEGTPKIILN), and 375 to 399 (SSISELDLSSNAFKGSFPIIPPYVN). An N-linked (GlcNAc...) asparagine glycan is attached at asparagine 161. Residue asparagine 230 is glycosylated (N-linked (GlcNAc...) asparagine). Asparagine 304 and asparagine 314 each carry an N-linked (GlcNAc...) asparagine glycan. N-linked (GlcNAc...) asparagine glycans are attached at residues asparagine 356 and asparagine 374. One copy of the LRR 13; degenerate repeat lies at 400 to 418 (IMAASNNYFTGGIPLIFCK). LRR repeat units follow at residues 419 to 443 (RYRLSLLDLSNNNFSGTIPRCLTNV), 444 to 470 (SLGLEALKLSNNSLTGRLPDIEDRLVL), 472 to 489 (DVGHNQISGKLPRSLVNC), and 490 to 515 (TTLKFLNVEGNHINDTFPFWLKALTR). 5 N-linked (GlcNAc...) asparagine glycosylation sites follow: asparagine 431, asparagine 442, asparagine 454, asparagine 488, and asparagine 503. One copy of the LRR 18; degenerate repeat lies at 516-536 (LEIIVLRSNRFHGPISSPEVS). 5 LRR repeats span residues 539 to 563 (FTALRIIDISRNSFNGSLPQNYFAN), 614 to 637 (DTYTSIDFSGNSFEGQIPESIGDL), 638 to 661 (KSLIVLDLSNNSFTGRIPSSLAKL), 662 to 685 (KQLESLDLSQNRISGNIPQELREL), and 687 to 709 (FLGYVNMSHNRLTGQIPQSTQVG). N-linked (GlcNAc...) asparagine glycans are attached at residues asparagine 553 and asparagine 563. Asparagine 647 carries an N-linked (GlcNAc...) asparagine glycan. An N-linked (GlcNAc...) asparagine glycan is attached at asparagine 692. The helical transmembrane segment at 759–779 (AAAIGYGPGVLFGLAIGQAFA) threads the bilayer. At 780 to 792 (RYKPVLFYKLFRL) the chain is on the cytoplasmic side.

It belongs to the RLP family.

The protein resides in the cell membrane. This chain is Receptor-like protein 54, found in Arabidopsis thaliana (Mouse-ear cress).